A 342-amino-acid polypeptide reads, in one-letter code: Galactose mutarotase (342 aa).

At serine 14 the chain carries Phosphoserine. Beta-D-galactose-binding positions include 81–82 (NR), histidine 107, 176–178 (HSY), aspartate 243, glutamine 279, and glutamate 307. Histidine 176 functions as the Proton donor in the catalytic mechanism. Glutamate 307 serves as the catalytic Proton acceptor.

The protein belongs to the aldose epimerase family. Monomer.

The protein resides in the cytoplasm. It catalyses the reaction alpha-D-galactose = beta-D-galactose. The enzyme catalyses alpha-D-glucose = beta-D-glucose. It functions in the pathway carbohydrate metabolism; hexose metabolism. It participates in carbohydrate metabolism; galactose metabolism. Functionally, mutarotase that catalyzes the interconversion of beta-D-galactose and alpha-D-galactose during galactose metabolism. Beta-D-galactose is metabolized in the liver into glucose 1-phosphate, the primary metabolic fuel, by the action of four enzymes that constitute the Leloir pathway: GALM, GALK1 (galactokinase), GALT (galactose-1-phosphate uridylyltransferase) and GALE (UDP-galactose-4'-epimerase). Involved in the maintenance of the equilibrium between the beta- and alpha-anomers of galactose, therefore ensuring a sufficient supply of the alpha-anomer for GALK1. Also active on D-glucose although shows a preference for galactose over glucose. This is Galactose mutarotase from Mus musculus (Mouse).